The following is a 333-amino-acid chain: Chemokine XC receptor 1 (333 aa).

Residues 1–31 (MESSGNPESTTFFYYDLQSQPCENQAWVFAT) are Extracellular-facing. A helical transmembrane segment spans residues 32-59 (LATTVLYCLVFLLSLVGNSLVLWVLVKY). Over 60-69 (ESLESLTNIF) the chain is Cytoplasmic. Residues 70 to 89 (ILNLCLSDLVFACLLPVWIS) form a helical membrane-spanning segment. Over 90-103 (PYHWGWVLGDFLCK) the chain is Extracellular. Cysteine 102 and cysteine 175 are disulfide-bonded. Residues 104-125 (LLNMIFSISLYSSIFFLTIMTI) traverse the membrane as a helical segment. At 126–142 (HRYLSVVSPLSTLRVPT) the chain is on the cytoplasmic side. The chain crosses the membrane as a helical span at residues 143-167 (LRCRVLVTMAVWVASILSSILDTIF). At 168–190 (HKVLSSGCDYSELTWYLTSVYQH) the chain is on the extracellular side. Residues 191-209 (NLFFLLSLGIILFCYVEIL) traverse the membrane as a helical segment. The Cytoplasmic portion of the chain corresponds to 210-225 (RTLFRSRSKRRHRTVK). The chain crosses the membrane as a helical span at residues 226-250 (LIFAIVVAYFLSWGPYNFTLFLQTL). Over 251–267 (FRTQIIRSCEAKQQLEY) the chain is Extracellular. A helical transmembrane segment spans residues 268 to 291 (ALLICRNLAFSHCCFNPVLYVFVG). Over 292–333 (VKFRTHLKHVLRQFWFCRLQAPSPASIPHSPGAFAYEGASFY) the chain is Cytoplasmic.

It belongs to the G-protein coupled receptor 1 family.

It localises to the cell membrane. In terms of biological role, receptor for chemokines SCYC1 and SCYC2. Subsequently transduces a signal by increasing the intracellular calcium ions level. Receptor for XCL1/Lymphotactin. The polypeptide is Chemokine XC receptor 1 (XCR1) (Homo sapiens (Human)).